A 493-amino-acid chain; its full sequence is MFS-type transporter efuF (493 aa).

Helical transmembrane passes span 90 to 110 (ITLVLFYVTFCLLDVPANMLL), 117 to 137 (IMLPTLMMGWGSMTLIQCAVH), 147 to 167 (LLMGAFEAGFMAGVVYYLTTF), 179 to 199 (IFYGAATIAGAFSGLLAYGVF), 211 to 231 (FLMIIEGSATILLASFAYWHL), 279 to 299 (IALYAVIGISYGVASASVGNF), 316 to 336 (LYTVAPYCVGCVILLAQCTSS), 343 to 363 (STHLAGAMLLTFVGFILLITL), 370 to 390 (GPTYFACFLLAAGAFTPSCIF), 406 to 426 (AVTGFMVGASNSGGIISSLAF), and 435 to 455 (IPALIVTATFQGVGIVLVLGF).

The protein belongs to the major facilitator superfamily.

It localises to the membrane. MFS-type transporter; part of the gene cluster that mediates the biosynthesis of enfumafungin, a glycosylated fernene-type triterpenoid with potent antifungal activity, mediated by its interaction with beta-1,3-glucan synthase and the fungal cell wall. Might facilitate the transport of glucose units to the subcellular site of enfumafungin biosynthesis. In Hormonema carpetanum, this protein is MFS-type transporter efuF.